We begin with the raw amino-acid sequence, 465 residues long: UDP-N-acetylmuramate--L-alanine ligase (465 aa).

112-118 (GTHGKTT) serves as a coordination point for ATP.

Belongs to the MurCDEF family.

Its subcellular location is the cytoplasm. It carries out the reaction UDP-N-acetyl-alpha-D-muramate + L-alanine + ATP = UDP-N-acetyl-alpha-D-muramoyl-L-alanine + ADP + phosphate + H(+). Its pathway is cell wall biogenesis; peptidoglycan biosynthesis. Its function is as follows. Cell wall formation. This Burkholderia pseudomallei (strain 1106a) protein is UDP-N-acetylmuramate--L-alanine ligase.